The sequence spans 189 residues: Copper transport protein CTR2 (189 aa).

The Cytoplasmic segment spans residues 1–81; that stretch reads MDDKKTWSTV…VVFEWWHIKT (81 aa). Residues 82–102 traverse the membrane as a helical segment; it reads LPGLILSCLAIFGLAYLYEYL. At 103–142 the chain is on the vacuolar side; the sequence is KYCVHKRQLSQRVLLPNRSLTKINQADKVSNSILYGLQVG. The chain crosses the membrane as a helical span at residues 143–163; sequence FSFMLMLVFMTYNGWLMLAVV. Over 164–189 the chain is Cytoplasmic; the sequence is CGAIWGNYSWCTSYSPEIDDSSLACH.

It belongs to the copper transporter (Ctr) (TC 1.A.56) family. SLC31A subfamily. In terms of assembly, homomultimer.

The protein resides in the vacuole membrane. In terms of biological role, provides bioavailable copper via mobilization of vacuolar copper stores and export to the cytoplasm. This is Copper transport protein CTR2 (CTR2) from Saccharomyces cerevisiae (strain ATCC 204508 / S288c) (Baker's yeast).